A 372-amino-acid polypeptide reads, in one-letter code: DNA damage-repair/toleration protein DRT100 (372 aa).

Residues 1-26 (MRKLLASPFSSLLAVVFISVISVVRC) form the signal peptide. LRR repeat units follow at residues 136-158 (SLRI…IGKL), 160-183 (KLAV…TSLI), 184-205 (ELKH…DFGS), 208-230 (MLSR…ISGM), 232-254 (RLAD…MGNM), 256-277 (VLSL…SLLS), 280-302 (GLDV…FGSK), 304-326 (YLVS…LSSA), and 328-350 (FVGH…FPFD).

In terms of biological role, this protein is able to complement bacterial recA mutations, but its native function in the plant is not known. The chain is DNA damage-repair/toleration protein DRT100 (DRT100) from Arabidopsis thaliana (Mouse-ear cress).